The sequence spans 251 residues: Ubiquinone/menaquinone biosynthesis C-methyltransferase UbiE (251 aa).

S-adenosyl-L-methionine contacts are provided by residues T74, D95, and 123–124 (NA).

Belongs to the class I-like SAM-binding methyltransferase superfamily. MenG/UbiE family.

It catalyses the reaction a 2-demethylmenaquinol + S-adenosyl-L-methionine = a menaquinol + S-adenosyl-L-homocysteine + H(+). The enzyme catalyses a 2-methoxy-6-(all-trans-polyprenyl)benzene-1,4-diol + S-adenosyl-L-methionine = a 5-methoxy-2-methyl-3-(all-trans-polyprenyl)benzene-1,4-diol + S-adenosyl-L-homocysteine + H(+). It participates in quinol/quinone metabolism; menaquinone biosynthesis; menaquinol from 1,4-dihydroxy-2-naphthoate: step 2/2. Its pathway is cofactor biosynthesis; ubiquinone biosynthesis. In terms of biological role, methyltransferase required for the conversion of demethylmenaquinol (DMKH2) to menaquinol (MKH2) and the conversion of 2-polyprenyl-6-methoxy-1,4-benzoquinol (DDMQH2) to 2-polyprenyl-3-methyl-6-methoxy-1,4-benzoquinol (DMQH2). The chain is Ubiquinone/menaquinone biosynthesis C-methyltransferase UbiE from Shewanella halifaxensis (strain HAW-EB4).